We begin with the raw amino-acid sequence, 26 residues long: Phospholipase A2 homolog A1 (26 aa).

In terms of processing, contains 7 disulfide bonds. Expressed by the venom gland.

The protein localises to the secreted. The protein is Phospholipase A2 homolog A1 of Micrurus pyrrhocryptus (Coral snake).